The following is a 350-amino-acid chain: Holliday junction branch migration complex subunit RuvB (350 aa).

Residues M1–Y184 form a large ATPase domain (RuvB-L) region. ATP-binding positions include L23, R24, G65, K68, T69, T70, E131 to F133, R174, Y184, and R221. T69 contributes to the Mg(2+) binding site. A small ATPAse domain (RuvB-S) region spans residues T185–D255. The segment at P258 to D350 is head domain (RuvB-H). The DNA site is built by R294, R313, and R318.

It belongs to the RuvB family. In terms of assembly, homohexamer. Forms an RuvA(8)-RuvB(12)-Holliday junction (HJ) complex. HJ DNA is sandwiched between 2 RuvA tetramers; dsDNA enters through RuvA and exits via RuvB. An RuvB hexamer assembles on each DNA strand where it exits the tetramer. Each RuvB hexamer is contacted by two RuvA subunits (via domain III) on 2 adjacent RuvB subunits; this complex drives branch migration. In the full resolvosome a probable DNA-RuvA(4)-RuvB(12)-RuvC(2) complex forms which resolves the HJ.

It is found in the cytoplasm. It catalyses the reaction ATP + H2O = ADP + phosphate + H(+). Functionally, the RuvA-RuvB-RuvC complex processes Holliday junction (HJ) DNA during genetic recombination and DNA repair, while the RuvA-RuvB complex plays an important role in the rescue of blocked DNA replication forks via replication fork reversal (RFR). RuvA specifically binds to HJ cruciform DNA, conferring on it an open structure. The RuvB hexamer acts as an ATP-dependent pump, pulling dsDNA into and through the RuvAB complex. RuvB forms 2 homohexamers on either side of HJ DNA bound by 1 or 2 RuvA tetramers; 4 subunits per hexamer contact DNA at a time. Coordinated motions by a converter formed by DNA-disengaged RuvB subunits stimulates ATP hydrolysis and nucleotide exchange. Immobilization of the converter enables RuvB to convert the ATP-contained energy into a lever motion, pulling 2 nucleotides of DNA out of the RuvA tetramer per ATP hydrolyzed, thus driving DNA branch migration. The RuvB motors rotate together with the DNA substrate, which together with the progressing nucleotide cycle form the mechanistic basis for DNA recombination by continuous HJ branch migration. Branch migration allows RuvC to scan DNA until it finds its consensus sequence, where it cleaves and resolves cruciform DNA. In Beijerinckia indica subsp. indica (strain ATCC 9039 / DSM 1715 / NCIMB 8712), this protein is Holliday junction branch migration complex subunit RuvB.